Reading from the N-terminus, the 962-residue chain is MYHPGRSPSFLITLANVICAAILFDIHTGGYQPGSLIPIVAWMTPFVTLLWLSASFATYLYKYVRTRLLPEEKVARVYYTAQSAPYFDPALGVMMQFAPSHGGASIEVQVNPSWISLLGGSLKINGDDASNESAVLGSFYSSVKPGDEPASLVAIKSGPQTIGFGCRTKIDGDDCLFTANHVWNNSMRPTALAKRGKQVAIEDWETPLSCDHKMLDFVVVRVPKHVWSKLGVKATQLVCPSDKDAVTCYGGSSSDNLLSGTGVCSKVDFSWKLTHSCPTAAGWSGTPIYSSRGVVGMHVGFEDIGKLNRGVNAFYVSNYLLRSQETLPPELSVIEIPFEDVETRSYEFIEVEIKGRGKAKLGKREFAWIPESGKYWADDDDDSLPPPPKVVDGKMVWSSAQETVAEPLNLPAGGRVKALAALSQLAGYDFKEGEAASTRGMPLRFVGQSACKFRELCRKDTPDEVLRATRVFPELSDFSWPERGSKAELHSLLLQAGKFNPTGIPRNLEGACQNLLERYPASKSCYCLRGEAWSFDAVYEEVCKKAQSAEINEKASPGVPLSRLASTNKDLLKRHLELVALCVTERLFLLSEAEDLLDESPVDLVRRGLCDPVRLFVKQEPHASRKVREGRFRLISSVSLVDQLVERMLFGPQNQLEIAEWEHIPSKPGMGLSLRQQAKSLFDDLRVKHSRCPAAEADISGFDWSVQDWELWADVEMRIVLGGFGHKLAKAAQNRFSCFMNSVFQLSDGTLIEQQLPGIMKSGSYCTSSTNSRIRCLMAELIGSPWCIAMGDDSVEGWVDGAKDKYMRLGHTCKDYKPCATTISGRLYEVEFCSHVIREDRCWLASWPKTLFKYLSEGKWFFEDLERDVSSSPHWPRIRHYVVGNTPSPHKTNLQNQSPRYGEEVDKTTVNQGYSEHSGSPGHSIEEAQEPEAAPFCCEAASVYPGWGVHGPYCSGDYGSLT.

The next 3 membrane-spanning stretches (helical) occupy residues 10-30 (FLIT…HTGG), 36-56 (LIPI…SASF), and 74-96 (VARV…VMMQ). In terms of domain architecture, Peptidase S39 spans 135–335 (VLGSFYSSVK…TLPPELSVIE (201 aa)). Active-site for protease activity residues include H181, D216, and S284. A RdRp catalytic domain is found at 692-806 (CPAAEADISG…GWVDGAKDKY (115 aa)).

In terms of processing, the polyprotein is proteolytically cleaved into several chains by the viral protease.

It is found in the host membrane. The enzyme catalyses RNA(n) + a ribonucleoside 5'-triphosphate = RNA(n+1) + diphosphate. In terms of biological role, responsible for cleavages of polyprotein P2A and replicase polyprotein P2AB. Functionally, covalently attached to the 5' extremity of the genomic and subgenomic RNAs. It may serve as a primer for the replicase. Replicates the viral genome. The sequence is that of Replicase polyprotein P2AB from Glycine max (Soybean).